The chain runs to 290 residues: Cbb3-type cytochrome c oxidase subunit CcoP (290 aa).

The interval 1–22 is disordered; it reads MSVKPTKQKPGEPPTTGHSWDG. Residues 1 to 37 lie on the Cytoplasmic side of the membrane; it reads MSVKPTKQKPGEPPTTGHSWDGIEEFDNPMPRWWLWT. A helical membrane pass occupies residues 38–58; that stretch reads FYVTIVWAIGYSILYPAWPLI. Topologically, residues 59 to 290 are periplasmic; that stretch reads NGATNGLIGH…VYVHGLGGGE (232 aa). Cytochrome c domains follow at residues 109 to 199 and 206 to 287; these read YATN…LQIS and ALSA…HGLG. Cys122, Cys125, His126, Met174, Cys219, Cys222, His223, and Met264 together coordinate heme c.

It belongs to the CcoP / FixP family. In terms of assembly, component of the cbb3-type cytochrome c oxidase at least composed of CcoN, CcoO, CcoQ and CcoP. The cofactor is heme c.

The protein resides in the cell inner membrane. Its pathway is energy metabolism; oxidative phosphorylation. C-type cytochrome. Part of the cbb3-type cytochrome c oxidase complex. CcoP subunit is required for transferring electrons from donor cytochrome c via its heme groups to CcoO subunit. From there, electrons are shuttled to the catalytic binuclear center of CcoN subunit where oxygen reduction takes place. The complex also functions as a proton pump. The protein is Cbb3-type cytochrome c oxidase subunit CcoP of Cereibacter sphaeroides (strain ATCC 17023 / DSM 158 / JCM 6121 / CCUG 31486 / LMG 2827 / NBRC 12203 / NCIMB 8253 / ATH 2.4.1.) (Rhodobacter sphaeroides).